Here is a 262-residue protein sequence, read N- to C-terminus: Thrombin-like enzyme calobin-1 (262 aa).

Positions 1–18 (MVLISVLANLLILQLSYA) are cleaved as a signal peptide. The propeptide occupies 19-24 (QKSSEL). The 229-residue stretch at 25 to 253 (VIGGDECNIN…HLDWIQSIIA (229 aa)) folds into the Peptidase S1 domain. 6 cysteine pairs are disulfide-bonded: cysteine 31–cysteine 165, cysteine 52–cysteine 68, cysteine 100–cysteine 260, cysteine 144–cysteine 214, cysteine 176–cysteine 193, and cysteine 204–cysteine 229. Histidine 67 acts as the Charge relay system in catalysis. Asparagine 105 is a glycosylation site (N-linked (GlcNAc...) asparagine). Residue aspartate 112 is the Charge relay system of the active site. Serine 208 serves as the catalytic Charge relay system.

It belongs to the peptidase S1 family. Snake venom subfamily. As to quaternary structure, monomer. N-glycosylated. As to expression, expressed by the venom gland.

Its subcellular location is the secreted. Its activity is regulated as follows. Strongly inhibited by PMSF, and moderately by benzamidine and soybean trypsin inhibitor. Thrombin-like snake venom serine protease. Has a coagulant activity. Acts on alpha-chains of fibrinogen (FGA) generating fibrinopeptide A. The polypeptide is Thrombin-like enzyme calobin-1 (Gloydius ussuriensis (Ussuri mamushi)).